The following is a 196-amino-acid chain: ATP-dependent Clp protease proteolytic subunit (196 aa).

Residue Ser98 is the Nucleophile of the active site. His123 is an active-site residue.

The protein belongs to the peptidase S14 family. Fourteen ClpP subunits assemble into 2 heptameric rings which stack back to back to give a disk-like structure with a central cavity, resembling the structure of eukaryotic proteasomes.

Its subcellular location is the cytoplasm. The enzyme catalyses Hydrolysis of proteins to small peptides in the presence of ATP and magnesium. alpha-casein is the usual test substrate. In the absence of ATP, only oligopeptides shorter than five residues are hydrolyzed (such as succinyl-Leu-Tyr-|-NHMec, and Leu-Tyr-Leu-|-Tyr-Trp, in which cleavage of the -Tyr-|-Leu- and -Tyr-|-Trp bonds also occurs).. Functionally, cleaves peptides in various proteins in a process that requires ATP hydrolysis. Has a chymotrypsin-like activity. Plays a major role in the degradation of misfolded proteins. In Actinobacillus pleuropneumoniae serotype 5b (strain L20), this protein is ATP-dependent Clp protease proteolytic subunit.